We begin with the raw amino-acid sequence, 445 residues long: Argininosuccinate synthase (445 aa).

ATP is bound by residues 17–25 (AFSGGLDTS) and A43. Y99 provides a ligand contact to L-citrulline. G129 and T131 together coordinate ATP. Positions 131, 135, and 136 each coordinate L-aspartate. N135 contributes to the L-citrulline binding site. D136 lines the ATP pocket. Positions 139 and 192 each coordinate L-citrulline. D194 serves as a coordination point for ATP. Residues T201, E203, and E280 each coordinate L-citrulline.

This sequence belongs to the argininosuccinate synthase family. Type 2 subfamily. As to quaternary structure, homotetramer.

It localises to the cytoplasm. It carries out the reaction L-citrulline + L-aspartate + ATP = 2-(N(omega)-L-arginino)succinate + AMP + diphosphate + H(+). The protein operates within amino-acid biosynthesis; L-arginine biosynthesis; L-arginine from L-ornithine and carbamoyl phosphate: step 2/3. The polypeptide is Argininosuccinate synthase (Bordetella pertussis (strain Tohama I / ATCC BAA-589 / NCTC 13251)).